The sequence spans 317 residues: Ribonuclease Z (317 aa).

Positions 61, 63, 65, 66, 139, 210, and 268 each coordinate Zn(2+). Aspartate 65 serves as the catalytic Proton acceptor.

It belongs to the RNase Z family. As to quaternary structure, homodimer. Zn(2+) is required as a cofactor.

The catalysed reaction is Endonucleolytic cleavage of RNA, removing extra 3' nucleotides from tRNA precursor, generating 3' termini of tRNAs. A 3'-hydroxy group is left at the tRNA terminus and a 5'-phosphoryl group is left at the trailer molecule.. With respect to regulation, inhibited by high salt concentrations. Zinc phosphodiesterase, which displays some tRNA 3'-processing endonuclease activity. Probably involved in tRNA maturation, by removing a 3'-trailer from precursor tRNA. Can also catalyze the 5' end cleavage of the 5S rRNA. This Haloferax volcanii (strain ATCC 29605 / DSM 3757 / JCM 8879 / NBRC 14742 / NCIMB 2012 / VKM B-1768 / DS2) (Halobacterium volcanii) protein is Ribonuclease Z.